A 557-amino-acid polypeptide reads, in one-letter code: Elongator complex protein 3 (557 aa).

The Radical SAM core domain occupies 91–381 (RTASGIAVVA…YRVQRDIPMP (291 aa)). Residues cysteine 108, cysteine 118, and cysteine 121 each contribute to the [4Fe-4S] cluster site. Position 173 (lysine 173) interacts with acetyl-CoA. An N-acetyltransferase domain is found at 405–557 (TTCRDVRTRE…LDGPYMSKRI (153 aa)). Lysine 453 participates in a covalent cross-link: Glycyl lysine isopeptide (Lys-Gly) (interchain with G-Cter in ubiquitin). Acetyl-CoA contacts are provided by residues 485-488 (ELHV), 508-510 (FGT), and tyrosine 541.

Belongs to the ELP3 family. In terms of assembly, component of the elongator complex which consists of ELP1/IKI3, ELP2, ELP3, ELP4, ELP5/IKI1 and ELP6. The elongator complex is composed of two copies of the Elp123 subcomplex (composed of ELP1/IKI3, ELP2 and ELP3) and two copies of the Elp456 subcomplex (composed of ELP4, ELP5/IKI1 and ELP6). The Elp123 subcomplex forms a two-lobed scaffold, which binds the Elp456 subcomplex asymmetrically. In each lobe, ELP2 is tightly sandwiched between ELP1/IKI3 and ELP3. The Elp123 subcomplex binds tRNA through ELP1/IKI3 and ELP3 and can bind 2 tRNAs simultaneously. tRNA-binding induces conformational rearrangements which precisely position the targeted anticodon base in the active site. ELP3 interacts with KTI11/DPH3. ELP3 interacts with KTI12. The Elp456 subcomplex binds tRNA and has ATPase activity. It depends on [4Fe-4S] cluster as a cofactor.

Its subcellular location is the cytoplasm. The protein localises to the nucleus. It carries out the reaction uridine(34) in tRNA + acetyl-CoA + S-adenosyl-L-methionine + H2O = 5-(carboxymethyl)uridine(34) in tRNA + 5'-deoxyadenosine + L-methionine + CoA + 2 H(+). It functions in the pathway tRNA modification; 5-methoxycarbonylmethyl-2-thiouridine-tRNA biosynthesis. Functionally, catalytic tRNA acetyltransferase subunit of the elongator complex which is required for multiple tRNA modifications, including mcm5U (5-methoxycarbonylmethyl uridine), mcm5s2U (5-methoxycarbonylmethyl-2-thiouridine), and ncm5U (5-carbamoylmethyl uridine). In the elongator complex, acts as a tRNA uridine(34) acetyltransferase, which mediates formation of carboxymethyluridine in the wobble base at position 34 in tRNAs. The complex functions as a gamma-toxin target (TOT); disruption of the complex confers resistance to Kluyveromyces lactis toxin zymocin (pGKL1 killer toxin). May also be involved in sensitivity to Pichia inositovora toxin. Independently, ELP3 may be involved in polarized exocytosis. The chain is Elongator complex protein 3 from Saccharomyces cerevisiae (strain ATCC 204508 / S288c) (Baker's yeast).